We begin with the raw amino-acid sequence, 471 residues long: Cytidine and dCMP deaminase domain-containing protein 1 (471 aa).

The tract at residues 1-27 (MAESNSWRSHRESDGNRSIPNGDDARN) is disordered. CMP/dCMP-type deaminase domains follow at residues 57-153 (LWME…LLSE) and 312-460 (GVIR…KLNG). 4 residues coordinate Zn(2+): His99, Cys124, Cys127, and His393. Residue Glu395 is the Proton donor of the active site. Positions 421 and 424 each coordinate Zn(2+).

The protein belongs to the cytidine and deoxycytidylate deaminase family. Requires Zn(2+) as cofactor.

It catalyses the reaction 2'-deoxycytidine + H2O + H(+) = 2'-deoxyuridine + NH4(+). The enzyme catalyses cytidine + H2O + H(+) = uridine + NH4(+). In terms of biological role, catalyzes the deamination of cytidine and deoxycytidine into uridine and deoxyuridine, respectively. This Danio rerio (Zebrafish) protein is Cytidine and dCMP deaminase domain-containing protein 1 (cdadc1).